Here is a 521-residue protein sequence, read N- to C-terminus: Organic cation/carnitine transporter 6 (521 aa).

Residues 1 to 37 (MADPISEPLLSHLTDDSGVNEKTRLEALTFDKIVEQS) are Cytoplasmic-facing. The helical transmembrane segment at 38-58 (LSDFGFWQFFQISLVGLALLF) threads the bilayer. Residues 59–123 (DAQQIFITVY…GLECSSSLLR (65 aa)) are Extracellular-facing. N79 is a glycosylation site (N-linked (GlcNAc...) asparagine). A helical transmembrane segment spans residues 124–144 (GMPSSAFYIGAIVGGFFLALI). The Cytoplasmic segment spans residues 145-154 (PDDSLGRKKL). Residues 155 to 177 (VLFSTFAMSITSISVIFSTNVWI) form a helical membrane-spanning segment. The Extracellular portion of the chain corresponds to 178-182 (YTFLK). Residues 183 to 200 (FIIGFSRSQTWSYALVLI) form a helical membrane-spanning segment. 200 to 207 (ISERVSTR) is an ATP binding site. Residues 201–213 (SERVSTRWRPRAT) lie on the Cytoplasmic side of the membrane. A helical transmembrane segment spans residues 214-234 (MIPFTLFVLGFMSLSGIAFLA). Residues 235–241 (QDSSWRY) are Extracellular-facing. A helical membrane pass occupies residues 242 to 262 (LYLYTSVPAVFYCIFLYLFAL). Residues 263–326 (ESPRWLHMQG…FFFRKWAFRR (64 aa)) lie on the Cytoplasmic side of the membrane. The helical transmembrane segment at 327 to 347 (ILVVMIIMFGLGISYYGVPLA) threads the bilayer. Topologically, residues 348 to 356 (ARDIDVNIY) are extracellular. The chain crosses the membrane as a helical span at residues 357-377 (LSETLNALVELPTFVITPILL). The Cytoplasmic segment spans residues 378-385 (ERFNRRSS). The helical transmembrane segment at 386–406 (VLVNTLLGGASGVLCFVLSIL) threads the bilayer. The Extracellular segment spans residues 407 to 412 (GKTEIA). A helical transmembrane segment spans residues 413-433 (FAFELGTFFCARIGFNLMAVF). At 434–447 (MVEMFPTCVRSSAT) the chain is on the cytoplasmic side. A helical membrane pass occupies residues 448-468 (MMFRQALVVGGACCPLIASIG). The Extracellular segment spans residues 469 to 473 (RYIPS). A helical transmembrane segment spans residues 474-494 (VSFAIFGIAMSGLGMFVLILP). Over 495–521 (ETKGLSLCDSMEEQEKRDQAVNTSHVC) the chain is Cytoplasmic.

The protein belongs to the major facilitator (TC 2.A.1) superfamily. Organic cation transporter (TC 2.A.1.19) family. As to expression, expressed in roots and stems. In the stem of secondary inflorescences, localized to the phloem. Also present in flowers, specifically in the stamen, in the filaments and the connective, and restricted to major veins in leaves.

The protein localises to the vacuole membrane. High affinity carnitine transporter involved in the active cellular uptake of carnitine. Also transports organic cations. The sequence is that of Organic cation/carnitine transporter 6 (OCT6) from Arabidopsis thaliana (Mouse-ear cress).